Reading from the N-terminus, the 128-residue chain is Aspartate 1-decarboxylase (128 aa).

Ser25 (schiff-base intermediate with substrate; via pyruvic acid) is an active-site residue. Position 25 is a pyruvic acid (Ser) (Ser25). A substrate-binding site is contributed by Thr57. Catalysis depends on Tyr58, which acts as the Proton donor. Gly73–Ala75 lines the substrate pocket.

Belongs to the PanD family. As to quaternary structure, heterooctamer of four alpha and four beta subunits. Pyruvate serves as cofactor. Post-translationally, is synthesized initially as an inactive proenzyme, which is activated by self-cleavage at a specific serine bond to produce a beta-subunit with a hydroxyl group at its C-terminus and an alpha-subunit with a pyruvoyl group at its N-terminus.

Its subcellular location is the cytoplasm. The enzyme catalyses L-aspartate + H(+) = beta-alanine + CO2. The protein operates within cofactor biosynthesis; (R)-pantothenate biosynthesis; beta-alanine from L-aspartate: step 1/1. Functionally, catalyzes the pyruvoyl-dependent decarboxylation of aspartate to produce beta-alanine. The polypeptide is Aspartate 1-decarboxylase (Burkholderia ambifaria (strain ATCC BAA-244 / DSM 16087 / CCUG 44356 / LMG 19182 / AMMD) (Burkholderia cepacia (strain AMMD))).